Here is a 431-residue protein sequence, read N- to C-terminus: NADH-quinone oxidoreductase chain 1 (431 aa).

NAD(+) is bound at residue 54–63 (GRGGAGFPTG). 167-214 (GAGAYICGEETALLESLEGKKGMPRMKPPFPAGAGLYGCPTTVNNVES) lines the FMN pocket. Positions 346, 349, 352, and 392 each coordinate [4Fe-4S] cluster.

It belongs to the complex I 51 kDa subunit family. In terms of assembly, NDH-1 is composed of at least 14 different subunits, Nqo1 to Nqo14. The complex has a L-shaped structure, with the hydrophobic arm (subunits Nqo7, Nqo8, Nqo10 to Nqo14) embedded in the inner membrane and the hydrophilic peripheral arm (subunits Nqo1 to Nqo6, Nqo9) protruding into the bacterial cytoplasm. The hydrophilic domain contains all the redox centers. The cofactor is FMN. [4Fe-4S] cluster serves as cofactor.

The protein resides in the cell inner membrane. It carries out the reaction a quinone + NADH + 5 H(+)(in) = a quinol + NAD(+) + 4 H(+)(out). Functionally, NDH-1 shuttles electrons from NADH, via FMN and iron-sulfur (Fe-S) centers, to quinones in the respiratory chain. The immediate electron acceptor for the enzyme in this species is believed to be ubiquinone. Couples the redox reaction to proton translocation (for every two electrons transferred, four hydrogen ions are translocated across the cytoplasmic membrane), and thus conserves the redox energy in a proton gradient. The protein is NADH-quinone oxidoreductase chain 1 (nqo1) of Paracoccus denitrificans.